The chain runs to 185 residues: uncharacterized protein (185 aa).

This is an uncharacterized protein from Escherichia coli (strain K12).